We begin with the raw amino-acid sequence, 201 residues long: Peptidyl-tRNA hydrolase (201 aa).

A tRNA-binding site is contributed by Tyr17. His22 serves as the catalytic Proton acceptor. Phe76, Asn78, and Asn124 together coordinate tRNA.

The protein belongs to the PTH family. In terms of assembly, monomer.

The protein localises to the cytoplasm. The enzyme catalyses an N-acyl-L-alpha-aminoacyl-tRNA + H2O = an N-acyl-L-amino acid + a tRNA + H(+). Functionally, hydrolyzes ribosome-free peptidyl-tRNAs (with 1 or more amino acids incorporated), which drop off the ribosome during protein synthesis, or as a result of ribosome stalling. Its function is as follows. Catalyzes the release of premature peptidyl moieties from peptidyl-tRNA molecules trapped in stalled 50S ribosomal subunits, and thus maintains levels of free tRNAs and 50S ribosomes. The polypeptide is Peptidyl-tRNA hydrolase (Nitratidesulfovibrio vulgaris (strain ATCC 29579 / DSM 644 / CCUG 34227 / NCIMB 8303 / VKM B-1760 / Hildenborough) (Desulfovibrio vulgaris)).